Consider the following 84-residue polypeptide: ATP synthase subunit c (84 aa).

2 consecutive transmembrane segments (helical) span residues 10 to 30 and 53 to 73; these read IAVG…FALL and FIIA…ALLF.

The protein belongs to the ATPase C chain family. In terms of assembly, F-type ATPases have 2 components, F(1) - the catalytic core - and F(0) - the membrane proton channel. F(1) has five subunits: alpha(3), beta(3), gamma(1), delta(1), epsilon(1). F(0) has three main subunits: a(1), b(2) and c(10-14). The alpha and beta chains form an alternating ring which encloses part of the gamma chain. F(1) is attached to F(0) by a central stalk formed by the gamma and epsilon chains, while a peripheral stalk is formed by the delta and b chains.

The protein resides in the cell inner membrane. F(1)F(0) ATP synthase produces ATP from ADP in the presence of a proton or sodium gradient. F-type ATPases consist of two structural domains, F(1) containing the extramembraneous catalytic core and F(0) containing the membrane proton channel, linked together by a central stalk and a peripheral stalk. During catalysis, ATP synthesis in the catalytic domain of F(1) is coupled via a rotary mechanism of the central stalk subunits to proton translocation. Its function is as follows. Key component of the F(0) channel; it plays a direct role in translocation across the membrane. A homomeric c-ring of between 10-14 subunits forms the central stalk rotor element with the F(1) delta and epsilon subunits. This is ATP synthase subunit c from Vibrio alginolyticus.